The primary structure comprises 498 residues: Protein flp (498 aa).

4 helical membrane passes run 6–26 (LYFL…IYIT), 389–409 (FNIV…FSAY), 433–453 (LSLC…YLIL), and 471–491 (LALI…LLFL).

It localises to the cell membrane. In terms of biological role, its precise function is unknown. Has no penicillin-binding activity and is not involved in methicillin resistance. The chain is Protein flp (flp) from Staphylococcus aureus (strain NCTC 8325 / PS 47).